The chain runs to 156 residues: ATP synthase subunit b (156 aa).

Residues 12-32 (VAFFIFVIFCMKFVWPPVIAA) traverse the membrane as a helical segment.

It belongs to the ATPase B chain family. F-type ATPases have 2 components, F(1) - the catalytic core - and F(0) - the membrane proton channel. F(1) has five subunits: alpha(3), beta(3), gamma(1), delta(1), epsilon(1). F(0) has three main subunits: a(1), b(2) and c(10-14). The alpha and beta chains form an alternating ring which encloses part of the gamma chain. F(1) is attached to F(0) by a central stalk formed by the gamma and epsilon chains, while a peripheral stalk is formed by the delta and b chains.

It localises to the cell inner membrane. F(1)F(0) ATP synthase produces ATP from ADP in the presence of a proton or sodium gradient. F-type ATPases consist of two structural domains, F(1) containing the extramembraneous catalytic core and F(0) containing the membrane proton channel, linked together by a central stalk and a peripheral stalk. During catalysis, ATP synthesis in the catalytic domain of F(1) is coupled via a rotary mechanism of the central stalk subunits to proton translocation. Its function is as follows. Component of the F(0) channel, it forms part of the peripheral stalk, linking F(1) to F(0). This chain is ATP synthase subunit b, found in Pseudomonas savastanoi pv. phaseolicola (strain 1448A / Race 6) (Pseudomonas syringae pv. phaseolicola (strain 1448A / Race 6)).